The chain runs to 900 residues: Trehalose-phosphatase (900 aa).

2 disordered regions span residues Ser76–Pro109 and Val874–Asn900. Basic and acidic residues predominate over residues Lys82–Asp108.

The protein in the C-terminal section; belongs to the trehalose phosphatase family. It in the N-terminal section; belongs to the glycosyltransferase 20 family. Requires Mg(2+) as cofactor.

It catalyses the reaction alpha,alpha-trehalose 6-phosphate + H2O = alpha,alpha-trehalose + phosphate. Its pathway is carbohydrate biosynthesis. Its function is as follows. Phosphatase catalytic subunit of the trehalose synthase complex that catalyzes the production of trehalose from glucose-6-phosphate and UDP-alpha-D-glucose in a two step process. The protein is Trehalose-phosphatase of Zygosaccharomyces rouxii.